The following is a 140-amino-acid chain: Nucleoside diphosphate kinase (140 aa).

Residues Lys10, Phe58, Arg86, Thr92, Arg103, and Asn113 each coordinate ATP. His116 functions as the Pros-phosphohistidine intermediate in the catalytic mechanism.

This sequence belongs to the NDK family. In terms of assembly, homohexamer. Mg(2+) serves as cofactor.

The protein resides in the cytoplasm. The catalysed reaction is a 2'-deoxyribonucleoside 5'-diphosphate + ATP = a 2'-deoxyribonucleoside 5'-triphosphate + ADP. It catalyses the reaction a ribonucleoside 5'-diphosphate + ATP = a ribonucleoside 5'-triphosphate + ADP. Its function is as follows. Major role in the synthesis of nucleoside triphosphates other than ATP. The ATP gamma phosphate is transferred to the NDP beta phosphate via a ping-pong mechanism, using a phosphorylated active-site intermediate. In Methanocaldococcus jannaschii (strain ATCC 43067 / DSM 2661 / JAL-1 / JCM 10045 / NBRC 100440) (Methanococcus jannaschii), this protein is Nucleoside diphosphate kinase.